A 615-amino-acid chain; its full sequence is MSAAPHLAPGADPAMIRNFCIIAHIDHGKSTLADRMLGVTGVVEARNMRAQYLDRMDIERERGITIKAQNVRLPWRAQDGQDYILHLIDTPGHVDFSYEVSRSLAACEGAVLLVDAAQGIEAQTLANLYLAIENDLTIVPVLNKIDLPAAQPEKYAEEIAAIIGCDPGDVLRVSGKTGQGVPELLNEIVRQVPAPVGNPAGPARAMIFDSVYDIYRGVITYVRVIDGTLTTRDRCLMMSTGASHETLEVGVISPDPHPTGSLSVGEVGYVIPGVKDVRQARVGDTVTTTRNPATEMLGGYRDPLPMVYSGLYPIDGSEYPALREALDKLQLNDAALTYEPETSAALGFGFRCGFLGLLHLEIVRERLEREFNLTLISTAPNVVYRVVMEDLSEVTVTNPSDWPGGKIAEVYEPVVDAMLLLPTDFVGAVMELCQGRRGVLKGMDYLSTDRVELKYTLPLGEIIFDFFDALKSRTRGYASLDYEPAGEQLADLVKVDILLQGETVDAFSAIVHKEKAYSYGVAMTTKLRELIPRQQFEVPIQAAIGSRIIARENIRAIRKDVLAKCYGGDITRKRKLLEKQKEGKKRMKTIGRVEVPQEAFIAALSTDTGKSATSK.

The 183-residue stretch at 14 to 196 folds into the tr-type G domain; it reads AMIRNFCIIA…EIVRQVPAPV (183 aa). Residues 26 to 31 and 143 to 146 contribute to the GTP site; these read DHGKST and NKID.

The protein belongs to the TRAFAC class translation factor GTPase superfamily. Classic translation factor GTPase family. LepA subfamily.

It is found in the cell membrane. It catalyses the reaction GTP + H2O = GDP + phosphate + H(+). Its function is as follows. Required for accurate and efficient protein synthesis under certain stress conditions. May act as a fidelity factor of the translation reaction, by catalyzing a one-codon backward translocation of tRNAs on improperly translocated ribosomes. Back-translocation proceeds from a post-translocation (POST) complex to a pre-translocation (PRE) complex, thus giving elongation factor G a second chance to translocate the tRNAs correctly. Binds to ribosomes in a GTP-dependent manner. This Frankia alni (strain DSM 45986 / CECT 9034 / ACN14a) protein is Elongation factor 4.